We begin with the raw amino-acid sequence, 341 residues long: Nicotinate-nucleotide--dimethylbenzimidazole phosphoribosyltransferase (341 aa).

The Proton acceptor role is filled by glutamate 306.

It belongs to the CobT family.

It catalyses the reaction 5,6-dimethylbenzimidazole + nicotinate beta-D-ribonucleotide = alpha-ribazole 5'-phosphate + nicotinate + H(+). The protein operates within nucleoside biosynthesis; alpha-ribazole biosynthesis; alpha-ribazole from 5,6-dimethylbenzimidazole: step 1/2. Its function is as follows. Catalyzes the synthesis of alpha-ribazole-5'-phosphate from nicotinate mononucleotide (NAMN) and 5,6-dimethylbenzimidazole (DMB). The polypeptide is Nicotinate-nucleotide--dimethylbenzimidazole phosphoribosyltransferase (Methylocella silvestris (strain DSM 15510 / CIP 108128 / LMG 27833 / NCIMB 13906 / BL2)).